We begin with the raw amino-acid sequence, 267 residues long: Non-homologous end joining protein Ku (267 aa).

The Ku domain occupies Ala11 to Ala195. The tract at residues Gly229–Gly267 is disordered.

This sequence belongs to the prokaryotic Ku family. Homodimer. Interacts with LigD.

In terms of biological role, with LigD forms a non-homologous end joining (NHEJ) DNA repair enzyme, which repairs dsDNA breaks with reduced fidelity. Binds linear dsDNA with 5'- and 3'- overhangs but not closed circular dsDNA nor ssDNA. Recruits and stimulates the ligase activity of LigD. The sequence is that of Non-homologous end joining protein Ku from Cereibacter sphaeroides (strain KD131 / KCTC 12085) (Rhodobacter sphaeroides).